We begin with the raw amino-acid sequence, 331 residues long: MSIAAKDIEPGDIPGNLTGGEFSPYHVFSAEEWSRFRADTPLTLTGEEVKRLRSLNDPVDLGEVRRIYLSLSRLLSAHVEASQILFQQRKRFLSMSDETKTPFVIGIAGSVAVGKSTTARILAELLARWPSSPKVDLITTDGFLYPNAILQRDNMMDRKGFPESYDIGALLRFLSAIKAGRPNVKAPTYSHLTYDVIPDQFQLIDRPDILIFEGINVLQSRDLPADGKIVPMVSDFFDFSIYIDAEESLIHNWYVSRFMRLRETAFQNPQSFFHRYSTISEDAARAIAEGLWHNINLKNLHQNIQPTRPRADLILQKGPSHLTQTVALRKL.

Residue 109–116 coordinates ATP; the sequence is GSVAVGKS.

It belongs to the prokaryotic pantothenate kinase family.

Its subcellular location is the cytoplasm. The catalysed reaction is (R)-pantothenate + ATP = (R)-4'-phosphopantothenate + ADP + H(+). Its pathway is cofactor biosynthesis; coenzyme A biosynthesis; CoA from (R)-pantothenate: step 1/5. The polypeptide is Pantothenate kinase (Sinorhizobium fredii (strain NBRC 101917 / NGR234)).